We begin with the raw amino-acid sequence, 473 residues long: ATP synthase subunit beta (473 aa).

Residue 153 to 160 coordinates ATP; the sequence is GGAGVGKT.

The protein belongs to the ATPase alpha/beta chains family. As to quaternary structure, F-type ATPases have 2 components, CF(1) - the catalytic core - and CF(0) - the membrane proton channel. CF(1) has five subunits: alpha(3), beta(3), gamma(1), delta(1), epsilon(1). CF(0) has three main subunits: a(1), b(2) and c(9-12). The alpha and beta chains form an alternating ring which encloses part of the gamma chain. CF(1) is attached to CF(0) by a central stalk formed by the gamma and epsilon chains, while a peripheral stalk is formed by the delta and b chains.

The protein localises to the cell inner membrane. It catalyses the reaction ATP + H2O + 4 H(+)(in) = ADP + phosphate + 5 H(+)(out). In terms of biological role, produces ATP from ADP in the presence of a proton gradient across the membrane. The catalytic sites are hosted primarily by the beta subunits. This Rickettsia bellii (strain OSU 85-389) protein is ATP synthase subunit beta.